The primary structure comprises 576 residues: Arginine--tRNA ligase (576 aa).

The 'HIGH' region signature appears at 121–131 (PNLAKEMHVGH).

This sequence belongs to the class-I aminoacyl-tRNA synthetase family. As to quaternary structure, monomer.

Its subcellular location is the cytoplasm. The enzyme catalyses tRNA(Arg) + L-arginine + ATP = L-arginyl-tRNA(Arg) + AMP + diphosphate. This Alteromonas mediterranea (strain DSM 17117 / CIP 110805 / LMG 28347 / Deep ecotype) protein is Arginine--tRNA ligase.